Here is a 322-residue protein sequence, read N- to C-terminus: uncharacterized protein (322 aa).

Residues 1–27 (MKRLFWNLKHKKAWLVLLLGTGMILSS) form the signal peptide. C28 carries the N-palmitoyl cysteine lipid modification. Residue C28 is the site of S-diacylglycerol cysteine attachment. The span at 235 to 254 (DNSTNPNAPGSGQGDSTPPA) shows a compositional bias: polar residues. The interval 235-298 (DNSTNPNAPG…AVQRSQKSYG (64 aa)) is disordered. Positions 257-267 (GEGGGSDGSSG) are enriched in gly residues. Positions 274 to 296 (NGQNTTPTSPQSSQPAVQRSQKS) are enriched in polar residues.

Its subcellular location is the cell membrane. This is an uncharacterized protein from Mycoplasma genitalium (strain ATCC 33530 / DSM 19775 / NCTC 10195 / G37) (Mycoplasmoides genitalium).